The chain runs to 320 residues: L-lactate dehydrogenase 2 (320 aa).

NAD(+)-binding positions include 18–19 (AV), D40, and R45. Residues Q88, R94, and 126–129 (NPVD) contribute to the substrate site. NAD(+) contacts are provided by residues 124–126 (ITN) and S149. 154 to 157 (DSAR) is a binding site for substrate. Residues R159 and 171–176 (KNVHAY) each bind beta-D-fructose 1,6-bisphosphate. Residue H181 is the Proton acceptor of the active site. Y228 carries the post-translational modification Phosphotyrosine. T237 serves as a coordination point for substrate.

Belongs to the LDH/MDH superfamily. LDH family. In terms of assembly, homotetramer.

Its subcellular location is the cytoplasm. The catalysed reaction is (S)-lactate + NAD(+) = pyruvate + NADH + H(+). It functions in the pathway fermentation; pyruvate fermentation to lactate; (S)-lactate from pyruvate: step 1/1. Its activity is regulated as follows. Allosterically activated by fructose 1,6-bisphosphate (FBP). Functionally, catalyzes the conversion of lactate to pyruvate. The protein is L-lactate dehydrogenase 2 of Bifidobacterium longum subsp. longum (strain ATCC 15707 / DSM 20219 / JCM 1217 / NCTC 11818 / E194b).